The primary structure comprises 365 residues: tRNA/tmRNA (uracil-C(5))-methyltransferase (365 aa).

Residues Q189, Y217, N222, E238, and D298 each coordinate S-adenosyl-L-methionine. The Nucleophile role is filled by C323. The active-site Proton acceptor is the E357.

This sequence belongs to the class I-like SAM-binding methyltransferase superfamily. RNA M5U methyltransferase family. TrmA subfamily.

It catalyses the reaction uridine(54) in tRNA + S-adenosyl-L-methionine = 5-methyluridine(54) in tRNA + S-adenosyl-L-homocysteine + H(+). It carries out the reaction uridine(341) in tmRNA + S-adenosyl-L-methionine = 5-methyluridine(341) in tmRNA + S-adenosyl-L-homocysteine + H(+). In terms of biological role, dual-specificity methyltransferase that catalyzes the formation of 5-methyluridine at position 54 (m5U54) in all tRNAs, and that of position 341 (m5U341) in tmRNA (transfer-mRNA). This chain is tRNA/tmRNA (uracil-C(5))-methyltransferase, found in Shewanella sediminis (strain HAW-EB3).